Here is a 512-residue protein sequence, read N- to C-terminus: Polyamine aminopropyltransferase (512 aa).

A run of 7 helical transmembrane segments spans residues isoleucine 19–leucine 39, leucine 48–methionine 68, valine 76–isoleucine 96, tyrosine 108–isoleucine 128, alanine 151–valine 171, lysine 172–phenylalanine 192, and phenylalanine 199–phenylalanine 219. The PABS domain occupies alanine 215–arginine 450. The interval leucine 217–isoleucine 457 is spermidine synthase. Glutamine 245 serves as a coordination point for S-methyl-5'-thioadenosine. Histidine 275 and aspartate 299 together coordinate spermidine. Residues aspartate 319 and aspartate 353–alanine 354 contribute to the S-methyl-5'-thioadenosine site. Residue aspartate 371 is the Proton acceptor of the active site.

Belongs to the spermidine/spermine synthase family. As to quaternary structure, homodimer or homotetramer.

The protein resides in the cell membrane. It catalyses the reaction S-adenosyl 3-(methylsulfanyl)propylamine + putrescine = S-methyl-5'-thioadenosine + spermidine + H(+). It functions in the pathway amine and polyamine biosynthesis; spermidine biosynthesis; spermidine from putrescine: step 1/1. Its function is as follows. Catalyzes the irreversible transfer of a propylamine group from the amino donor S-adenosylmethioninamine (decarboxy-AdoMet) to putrescine (1,4-diaminobutane) to yield spermidine. This Oceanobacillus iheyensis (strain DSM 14371 / CIP 107618 / JCM 11309 / KCTC 3954 / HTE831) protein is Polyamine aminopropyltransferase.